The chain runs to 91 residues: UPF0512 protein F (91 aa).

The protein belongs to the UPF0512 family.

In Dictyostelium discoideum (Social amoeba), this protein is UPF0512 protein F.